The following is a 563-amino-acid chain: ATP-dependent RNA helicase DeaD (563 aa).

Residues 13-41 (ATFADLQIHPRVLRAIGDVGYESPTAIQA) carry the Q motif motif. The Helicase ATP-binding domain maps to 44 to 215 (IPALMAGSDV…AKYLHDPFEV (172 aa)). 57 to 64 (AQTGTGKT) is an ATP binding site. A DEAD box motif is present at residues 163–166 (DEAD). Residues 226–385 (NISQSYIQVA…AQLPTVEDVN (160 aa)) enclose the Helicase C-terminal domain. Disordered regions lie at residues 441–470 (LMAP…PDLT) and 543–563 (YRPP…KHVG). The span at 451 to 461 (RNRDQRRDRPQ) shows a compositional bias: basic and acidic residues. Residues 551-563 (RHNGGKPRRKHVG) show a composition bias toward basic residues.

Belongs to the DEAD box helicase family. DeaD/CsdA subfamily.

The protein resides in the cytoplasm. The enzyme catalyses ATP + H2O = ADP + phosphate + H(+). Functionally, DEAD-box RNA helicase involved in various cellular processes at low temperature, including ribosome biogenesis, mRNA degradation and translation initiation. This Mycobacterium tuberculosis (strain CDC 1551 / Oshkosh) protein is ATP-dependent RNA helicase DeaD.